The sequence spans 414 residues: CCA-adding enzyme (414 aa).

Residues G8 and R11 each contribute to the ATP site. CTP contacts are provided by G8 and R11. D21 and D23 together coordinate Mg(2+). ATP contacts are provided by R91, R137, and R140. CTP is bound by residues R91, R137, and R140.

This sequence belongs to the tRNA nucleotidyltransferase/poly(A) polymerase family. Bacterial CCA-adding enzyme type 2 subfamily. It depends on Mg(2+) as a cofactor.

It catalyses the reaction a tRNA precursor + 2 CTP + ATP = a tRNA with a 3' CCA end + 3 diphosphate. The enzyme catalyses a tRNA with a 3' CCA end + 2 CTP + ATP = a tRNA with a 3' CCACCA end + 3 diphosphate. Its function is as follows. Catalyzes the addition and repair of the essential 3'-terminal CCA sequence in tRNAs without using a nucleic acid template. Adds these three nucleotides in the order of C, C, and A to the tRNA nucleotide-73, using CTP and ATP as substrates and producing inorganic pyrophosphate. tRNA 3'-terminal CCA addition is required both for tRNA processing and repair. Also involved in tRNA surveillance by mediating tandem CCA addition to generate a CCACCA at the 3' terminus of unstable tRNAs. While stable tRNAs receive only 3'-terminal CCA, unstable tRNAs are marked with CCACCA and rapidly degraded. This chain is CCA-adding enzyme, found in Buchnera aphidicola subsp. Acyrthosiphon pisum (strain Tuc7).